The sequence spans 695 residues: D-(-)-3-hydroxybutyrate oligomer hydrolase (695 aa).

Positions 1 to 17 are cleaved as a signal peptide; that stretch reads MTTHGWGTRILLGAALA. Residue Ser308 is the Charge relay system of the active site.

The protein belongs to the D-(-)-3-hydroxybutyrate oligomer hydrolase family.

It is found in the secreted. The catalysed reaction is (3R)-hydroxybutanoate dimer + H2O = 2 (R)-3-hydroxybutanoate + H(+). It functions in the pathway lipid metabolism; butanoate metabolism. Functionally, participates in the degradation of poly-3-hydroxybutyrate (PHB). It works downstream of poly(3-hydroxybutyrate) depolymerase, hydrolyzing D(-)-3-hydroxybutyrate oligomers of various length (3HB-oligomers) into 3HB-monomers. In Burkholderia ambifaria (strain ATCC BAA-244 / DSM 16087 / CCUG 44356 / LMG 19182 / AMMD) (Burkholderia cepacia (strain AMMD)), this protein is D-(-)-3-hydroxybutyrate oligomer hydrolase.